The following is a 394-amino-acid chain: Elongation factor Tu (394 aa).

In terms of domain architecture, tr-type G spans 10 to 204; that stretch reads KPHVNVGTIG…HLDTYIPEPE (195 aa). Positions 19–26 are G1; the sequence is GHVDHGKT. Position 19 to 26 (19 to 26) interacts with GTP; sequence GHVDHGKT. Mg(2+) is bound at residue Thr-26. The tract at residues 60–64 is G2; sequence GITIN. Residues 81–84 are G3; that stretch reads DCPG. GTP contacts are provided by residues 81–85 and 136–139; these read DCPGH and NKCD. The G4 stretch occupies residues 136–139; sequence NKCD. The G5 stretch occupies residues 174 to 176; it reads SAL.

Belongs to the TRAFAC class translation factor GTPase superfamily. Classic translation factor GTPase family. EF-Tu/EF-1A subfamily. Monomer.

It localises to the cytoplasm. It carries out the reaction GTP + H2O = GDP + phosphate + H(+). In terms of biological role, GTP hydrolase that promotes the GTP-dependent binding of aminoacyl-tRNA to the A-site of ribosomes during protein biosynthesis. The protein is Elongation factor Tu of Aeromonas salmonicida (strain A449).